Here is a 622-residue protein sequence, read N- to C-terminus: 1-deoxy-D-xylulose-5-phosphate synthase (622 aa).

Residues H80 and G121 to S123 contribute to the thiamine diphosphate site. Mg(2+) is bound at residue D152. Thiamine diphosphate-binding positions include G153–A154, N181, Y288, and E370. Position 181 (N181) interacts with Mg(2+).

The protein belongs to the transketolase family. DXPS subfamily. In terms of assembly, homodimer. The cofactor is Mg(2+). Thiamine diphosphate is required as a cofactor.

It carries out the reaction D-glyceraldehyde 3-phosphate + pyruvate + H(+) = 1-deoxy-D-xylulose 5-phosphate + CO2. It functions in the pathway metabolic intermediate biosynthesis; 1-deoxy-D-xylulose 5-phosphate biosynthesis; 1-deoxy-D-xylulose 5-phosphate from D-glyceraldehyde 3-phosphate and pyruvate: step 1/1. Its function is as follows. Catalyzes the acyloin condensation reaction between C atoms 2 and 3 of pyruvate and glyceraldehyde 3-phosphate to yield 1-deoxy-D-xylulose-5-phosphate (DXP). This Shewanella baltica (strain OS195) protein is 1-deoxy-D-xylulose-5-phosphate synthase.